The sequence spans 669 residues: DNA ligase (669 aa).

Residue 35-39 (DFEYD) coordinates NAD(+). The segment at 52 to 71 (YPEWDSPDSPTHRVGSDKTE) is disordered. The segment covering 61-71 (PTHRVGSDKTE) has biased composition (basic and acidic residues). NAD(+) contacts are provided by residues 84 to 85 (SL) and E115. The N6-AMP-lysine intermediate role is filled by K117. Residues R138, E175, K290, and K314 each coordinate NAD(+). Residues C408, C411, C426, and C432 each coordinate Zn(2+). The BRCT domain maps to 590-669 (AVSNRLAGKT…EEEFLRLIEE (80 aa)).

Belongs to the NAD-dependent DNA ligase family. LigA subfamily. The cofactor is Mg(2+). Mn(2+) is required as a cofactor.

The catalysed reaction is NAD(+) + (deoxyribonucleotide)n-3'-hydroxyl + 5'-phospho-(deoxyribonucleotide)m = (deoxyribonucleotide)n+m + AMP + beta-nicotinamide D-nucleotide.. Its function is as follows. DNA ligase that catalyzes the formation of phosphodiester linkages between 5'-phosphoryl and 3'-hydroxyl groups in double-stranded DNA using NAD as a coenzyme and as the energy source for the reaction. It is essential for DNA replication and repair of damaged DNA. The sequence is that of DNA ligase from Porphyromonas gingivalis (strain ATCC BAA-308 / W83).